The sequence spans 361 residues: uncharacterized protein (361 aa).

A compositionally biased stretch (basic residues) spans 1 to 10 (MRRYLKKAKP). Disordered stretches follow at residues 1 to 82 (MRRY…SSFH) and 94 to 147 (ALSH…VNTS). Basic and acidic residues-rich tracts occupy residues 44-57 (KEKN…KYEN) and 120-134 (FTKK…ESEL). Polar residues predominate over residues 135–147 (QTRSSPPLPVNTS). Residues 295-349 (NILTMDEQIQRLKEAIASEKLQQEERSQIIKSLMEEELEINEQEEKIKHSFIDLD) adopt a coiled-coil conformation.

It localises to the cytoplasm. It is found in the nucleus. This is an uncharacterized protein from Schizosaccharomyces pombe (strain 972 / ATCC 24843) (Fission yeast).